We begin with the raw amino-acid sequence, 379 residues long: Chaperone protein DnaJ (379 aa).

Residues Glu5–Gly69 enclose the J domain. A CR-type zinc finger spans residues Gly141 to Ala223. Positions 154, 157, 171, 174, 197, 200, 211, and 214 each coordinate Zn(2+). 4 CXXCXGXG motif repeats span residues Cys154 to Gly161, Cys171 to Gly178, Cys197 to Gly204, and Cys211 to Gly218.

The protein belongs to the DnaJ family. Homodimer. Zn(2+) serves as cofactor.

It is found in the cytoplasm. Its function is as follows. Participates actively in the response to hyperosmotic and heat shock by preventing the aggregation of stress-denatured proteins and by disaggregating proteins, also in an autonomous, DnaK-independent fashion. Unfolded proteins bind initially to DnaJ; upon interaction with the DnaJ-bound protein, DnaK hydrolyzes its bound ATP, resulting in the formation of a stable complex. GrpE releases ADP from DnaK; ATP binding to DnaK triggers the release of the substrate protein, thus completing the reaction cycle. Several rounds of ATP-dependent interactions between DnaJ, DnaK and GrpE are required for fully efficient folding. Also involved, together with DnaK and GrpE, in the DNA replication of plasmids through activation of initiation proteins. This chain is Chaperone protein DnaJ, found in Lactococcus lactis subsp. cremoris (strain SK11).